Here is a 108-residue protein sequence, read N- to C-terminus: UPF0060 membrane protein SAR2425 (108 aa).

4 helical membrane passes run 5–25 (IFIF…IWLW), 31–51 (SSLV…IATF), 60–80 (VYAA…MVVD), and 86–106 (KYDV…LLPS).

The protein belongs to the UPF0060 family.

The protein localises to the cell membrane. The protein is UPF0060 membrane protein SAR2425 of Staphylococcus aureus (strain MRSA252).